Reading from the N-terminus, the 378-residue chain is Ribosomal RNA large subunit methyltransferase G (378 aa).

Belongs to the methyltransferase superfamily. RlmG family.

Its subcellular location is the cytoplasm. The enzyme catalyses guanosine(1835) in 23S rRNA + S-adenosyl-L-methionine = N(2)-methylguanosine(1835) in 23S rRNA + S-adenosyl-L-homocysteine + H(+). Specifically methylates the guanine in position 1835 (m2G1835) of 23S rRNA. This Shigella flexneri protein is Ribosomal RNA large subunit methyltransferase G.